Here is a 144-residue protein sequence, read N- to C-terminus: Tryparedoxin (144 aa).

Positions 2–144 constitute a Thioredoxin domain; it reads SGLAKYLPGA…PDGANFPWPN (143 aa). The cysteines at positions 40 and 43 are disulfide-linked.

It belongs to the thioredoxin family.

Acts as a thiol-disulfide oxidoreductase. It is spontaneously reduced by trypanothione. The polypeptide is Tryparedoxin (Trypanosoma brucei brucei).